The sequence spans 264 residues: Accessory gland-specific peptide 26Aa (264 aa).

The first 18 residues, methionine 1–alanine 18, serve as a signal peptide directing secretion. The sufficient for promoting ovulation when expressed in females stretch occupies residues methionine 1 to asparagine 138. N-linked (GlcNAc...) asparagine glycans are attached at residues asparagine 88, asparagine 122, asparagine 138, and asparagine 145. The disordered stretch occupies residues leucine 189–asparagine 219. Residues lysine 194 to serine 203 are compositionally biased toward basic residues. The interval asparagine 219–leucine 264 is necessary and sufficient for homodimerization.

As to quaternary structure, homodimer. In terms of assembly, may form a homodimer. Glycosylation. In terms of processing, undergoes several cleavages as it is secreted and is further processed in the recipient female. The precursor molecule is proteolytically cleaved by the seminal metalloprotease Semp1 at Lys-48 to produce CP1-N and CP1-C. Post-translationally, cleaved at Lys-67 by Semp1 to generate CP2-N and CP2-C. Cleavage appears to take place in the mated female genital tract. Cleaved at Lys-117 by Semp1 to generate CP3-N and CP3-C. Cleavage appears to take place in the mated female genital tract. As to expression, produced in the male accessory glands and secreted into seminal fluid (at protein level). Detected in the main cells and secondary cells of the accessory glands of 1 day old males (at protein level). In 5 day old males, confined to the secondary cells and only reappears in the main cells after mating (at protein level). Produced in adult males 3-4 hr after eclosion, levels increase reaching a peak at day 3-5 which is maintained until at least day 10 of adulthood (at protein level). In unmated male adults, levels are maintained for the first 6 days of adulthood and then gradually decrease for at least the next 8 days. In mated females, detected in the genital tract 3 minutes after the start of mating (ASM) and is secreted into the female hemolymph via the posterior vaginal wall 5 minutes ASM (at protein level).

It is found in the secreted. It localises to the cytoplasm. Functionally, male seminal protein which enhances ovulation in female Drosophila by stimulating the release of oocytes by the ovary following mating. Acts by increasing octopamine (OA) neuronal signaling in the female genital tract leading to the postmating relaxation of the oviduct muscles. This activation of the OA signaling pathway is likely to indirectly contribute to the mating-dependent increase in the number of OA synaptic sites in the female reproductive tract. Its function is as follows. Male seminal peptide which is able to enhance ovulation in female Drosophila. The protein is Accessory gland-specific peptide 26Aa of Drosophila melanogaster (Fruit fly).